A 453-amino-acid polypeptide reads, in one-letter code: uncharacterized protein (453 aa).

Positions 74, 80, 83, and 162 each coordinate [4Fe-4S] cluster. S-adenosyl-L-methionine contacts are provided by glutamine 286, tyrosine 315, glutamate 336, and aspartate 384. The active-site Nucleophile is cysteine 411.

The protein belongs to the class I-like SAM-binding methyltransferase superfamily. RNA M5U methyltransferase family.

This is an uncharacterized protein from Staphylococcus aureus (strain Mu50 / ATCC 700699).